A 134-amino-acid polypeptide reads, in one-letter code: Profilin-3 (134 aa).

C13 and C118 form a disulfide bridge. The short motif at 84-100 (AVIRGKKGSGGITIKKT) is the Involved in PIP2 interaction element. A Phosphothreonine modification is found at T114.

Belongs to the profilin family. Occurs in many kinds of cells as a complex with monomeric actin in a 1:1 ratio. Phosphorylated by MAP kinases.

It localises to the cytoplasm. The protein resides in the cytoskeleton. Binds to actin and affects the structure of the cytoskeleton. At high concentrations, profilin prevents the polymerization of actin, whereas it enhances it at low concentrations. This Olea europaea (Common olive) protein is Profilin-3.